A 175-amino-acid polypeptide reads, in one-letter code: Avenin-like a7 (175 aa).

Positions 1–19 (MKTMFILALLAFTATSAVA) are cleaved as a signal peptide.

Belongs to the prolamin family. In terms of processing, contains 7 disulfide bonds.

Its function is as follows. Seed storage protein. Not integrated in the gluten polymer through disulfide bonds, unless incorporated by reduction and reoxidation during dough making. Increases dough strength and bread volume, but decreases dough stability when added into a base wheat flour. This is Avenin-like a7 from Triticum aestivum (Wheat).